Here is an 860-residue protein sequence, read N- to C-terminus: Leucine--tRNA ligase (860 aa).

The 'HIGH' region motif lies at Pro-42 to His-52. A 'KMSKS' region motif is present at residues Lys-619 to Ser-623. Residue Lys-622 coordinates ATP.

This sequence belongs to the class-I aminoacyl-tRNA synthetase family.

Its subcellular location is the cytoplasm. The catalysed reaction is tRNA(Leu) + L-leucine + ATP = L-leucyl-tRNA(Leu) + AMP + diphosphate. The sequence is that of Leucine--tRNA ligase from Actinobacillus succinogenes (strain ATCC 55618 / DSM 22257 / CCUG 43843 / 130Z).